An 817-amino-acid polypeptide reads, in one-letter code: Collagen-like protein 4 (817 aa).

Collagen-like domains lie at 83–142 (GDTG…KGQD), 145–264 (GSKG…KGDD), and 268–327 (GIQG…KGLK). Disordered stretches follow at residues 87-107 (NKGE…GDNG), 120-458 (FNGS…DKGD), and 479-543 (IIGD…KGDI). N-linked (GlcNAc...) asparagine; by host glycosylation is found at Asn-106 and Asn-121. 2 stretches are compositionally biased toward basic and acidic residues: residues 126-141 (IKGD…DKGQ) and 149-161 (QKGE…DDGI). An N-linked (GlcNAc...) asparagine; by host glycan is attached at Asn-183. Composition is skewed to basic and acidic residues over residues 212 to 224 (IKGD…EDGI) and 233 to 245 (SKGE…DDGT). Over residues 246 to 260 (KGITGLKGTKGNSGS) the composition is skewed to low complexity. A compositionally biased stretch (basic and acidic residues) spans 294 to 341 (KGSDGDKGNKGLDGIKGDLGDDGIKGDKGIKGLKGDTGNSDKGDKGSK). Residues Asn-345 and Asn-360 are each glycosylated (N-linked (GlcNAc...) asparagine; by host). 2 consecutive Collagen-like domains span residues 352–411 (GDKG…KGLV) and 430–489 (GDKG…KGIK). Basic and acidic residues-rich tracts occupy residues 354–368 (KGSK…ESGD), 377–390 (SKGD…KGDL), and 428–458 (SKGD…DKGD). Positions 480–494 (IGDNGSKGIKGSSNN) are enriched in low complexity. N-linked (GlcNAc...) asparagine; by host glycosylation is present at Asn-483. Composition is skewed to basic and acidic residues over residues 495–504 (KGDKGDKGNT), 515–525 (IKGDKGIKGSK), and 533–543 (EKGEKGTKGDI). In terms of domain architecture, Collagen-like 6 spans 512-570 (TKGIKGDKGIKGSKGDLGSVGEKGEKGTKGDIGTKGETGLKGIIGDKGELGSKGIKGLS). 3 N-linked (GlcNAc...) asparagine; by host glycosylation sites follow: Asn-709, Asn-712, and Asn-715. Positions 757 to 771 (GGGGASAFGNGGRGG) are enriched in gly residues. Residues 757–804 (GGGGASAFGNGGRGGNTTQAATKGEYGSGGGGGSEFSPSGSTNGGDGG) are disordered. A glycan (N-linked (GlcNAc...) asparagine; by host) is linked at Asn-772.

May be hydroxylated on lysine by the viral-encoded procollagen-lysine,2-oxoglutarate 5-dioxygenase.

The protein localises to the virion. In terms of biological role, may participate in the formation of a layer of cross-linked glycosylated fibrils at the viral surface thus giving it a hairy-like appearance. This chain is Collagen-like protein 4, found in Acanthamoeba polyphaga (Amoeba).